The chain runs to 194 residues: Crossover junction endodeoxyribonuclease RuvC (194 aa).

Residues Asp7, Glu68, and Asp141 contribute to the active site. The Mg(2+) site is built by Asp7, Glu68, and Asp141.

This sequence belongs to the RuvC family. As to quaternary structure, homodimer which binds Holliday junction (HJ) DNA. The HJ becomes 2-fold symmetrical on binding to RuvC with unstacked arms; it has a different conformation from HJ DNA in complex with RuvA. In the full resolvosome a probable DNA-RuvA(4)-RuvB(12)-RuvC(2) complex forms which resolves the HJ. Mg(2+) is required as a cofactor.

The protein resides in the cytoplasm. It carries out the reaction Endonucleolytic cleavage at a junction such as a reciprocal single-stranded crossover between two homologous DNA duplexes (Holliday junction).. Functionally, the RuvA-RuvB-RuvC complex processes Holliday junction (HJ) DNA during genetic recombination and DNA repair. Endonuclease that resolves HJ intermediates. Cleaves cruciform DNA by making single-stranded nicks across the HJ at symmetrical positions within the homologous arms, yielding a 5'-phosphate and a 3'-hydroxyl group; requires a central core of homology in the junction. The consensus cleavage sequence is 5'-(A/T)TT(C/G)-3'. Cleavage occurs on the 3'-side of the TT dinucleotide at the point of strand exchange. HJ branch migration catalyzed by RuvA-RuvB allows RuvC to scan DNA until it finds its consensus sequence, where it cleaves and resolves the cruciform DNA. In Mycolicibacterium vanbaalenii (strain DSM 7251 / JCM 13017 / BCRC 16820 / KCTC 9966 / NRRL B-24157 / PYR-1) (Mycobacterium vanbaalenii), this protein is Crossover junction endodeoxyribonuclease RuvC.